We begin with the raw amino-acid sequence, 547 residues long: Elongator complex protein 3 (547 aa).

The Radical SAM core domain maps to R82–P372. [4Fe-4S] cluster contacts are provided by C99, C109, and C112. S161 bears the Phosphoserine mark. K164 provides a ligand contact to acetyl-CoA. Y202 is subject to Phosphotyrosine; by ALK. Residue K229 is modified to N6-methyllysine. Residue Y251 is modified to Phosphotyrosine. Positions I396–K547 constitute an N-acetyltransferase domain. Residues E474–V477, F497–M499, and Y530 each bind acetyl-CoA.

This sequence belongs to the ELP3 family. In terms of assembly, component of the elongator complex which consists of ELP1, ELP2, ELP3, ELP4, ELP5 and ELP6. ELP1, ELP2 and ELP3 form the elongator core complex. Interacts with alpha-tubulin. [4Fe-4S] cluster is required as a cofactor. Tyrosine-phosphorylated; phosphorylation on Tyr-202 does not affect elongator complex integrity or ELP3 protein stability. Also serine/threonine-phosphorylated. As to expression, expressed in the cerebellum and spinal motor neurons.

It is found in the cytoplasm. The protein resides in the nucleus. The enzyme catalyses uridine(34) in tRNA + acetyl-CoA + S-adenosyl-L-methionine + H2O = 5-(carboxymethyl)uridine(34) in tRNA + 5'-deoxyadenosine + L-methionine + CoA + 2 H(+). The protein operates within tRNA modification; 5-methoxycarbonylmethyl-2-thiouridine-tRNA biosynthesis. Catalytic tRNA acetyltransferase subunit of the elongator complex which is required for multiple tRNA modifications, including mcm5U (5-methoxycarbonylmethyl uridine), mcm5s2U (5-methoxycarbonylmethyl-2-thiouridine), and ncm5U (5-carbamoylmethyl uridine). In the elongator complex, acts as a tRNA uridine(34) acetyltransferase by mediating formation of carboxymethyluridine in the wobble base at position 34 in tRNAs. May also act as a protein lysine acetyltransferase by mediating acetylation of target proteins; such activity is however unclear in vivo and recent evidences suggest that ELP3 primarily acts as a tRNA acetyltransferase. Involved in neurogenesis: regulates the migration and branching of projection neurons in the developing cerebral cortex, through a process depending on alpha-tubulin acetylation. Required for acetylation of GJA1 in the developing cerebral cortex. In Homo sapiens (Human), this protein is Elongator complex protein 3.